The primary structure comprises 315 residues: Gamma-hemolysin component C (315 aa).

The N-terminal stretch at 1 to 29 (MLKNKILATTLSVSLLAPLANPLLENAKA) is a signal peptide.

It belongs to the aerolysin family. As to quaternary structure, toxicity requires sequential binding and synergistic association of a class S and a class F component which form heterooligomeric complexes. HlgC (class S) associates with HlgB (class F) thus forming an CB toxin.

Functionally, toxin that seems to act by forming pores in the membrane of the cell. Has a hemolytic and a leucotoxic activity. This is Gamma-hemolysin component C (hlgC) from Staphylococcus aureus (strain MRSA252).